We begin with the raw amino-acid sequence, 1250 residues long: Nucleoporin pom152 (1250 aa).

The interval 1-79 is pore side; sequence MVTRVASSER…IYLRLLPKFR (79 aa). Residues 80-100 traverse the membrane as a helical segment; sequence IPWLSFQPAATLLQIAIFAAI. The cisternal side stretch occupies residues 101–1250; sequence NLLLSSLSSL…PQDSTSSSNI (1150 aa).

As to quaternary structure, component of the nuclear pore complex (NPC). NPC constitutes the exclusive means of nucleocytoplasmic transport. NPCs allow the passive diffusion of ions and small molecules and the active, nuclear transport receptor-mediated bidirectional transport of macromolecules such as proteins, RNAs, ribonucleoparticles (RNPs), and ribosomal subunits across the nuclear envelope.

The protein localises to the nucleus. It localises to the nuclear pore complex. The protein resides in the nucleus membrane. Functionally, functions as a component of the nuclear pore complex (NPC). NPC components, collectively referred to as nucleoporins (NUPs), can play the role of both NPC structural components and of docking or interaction partners for transiently associated nuclear transport factors. The protein is Nucleoporin pom152 (pom152) of Schizosaccharomyces pombe (strain 972 / ATCC 24843) (Fission yeast).